Consider the following 111-residue polypeptide: Wound-induced proteinase inhibitor 1 (111 aa).

Residues 1–23 form the signal peptide; sequence MESKFAHIIVFFLLATSFETLMA. A propeptide spanning residues 24 to 36 is cleaved from the precursor; the sequence is RKEIDGPEVIELL.

Belongs to the protease inhibitor I13 (potato type I serine protease inhibitor) family.

The protein localises to the secreted. The sequence is that of Wound-induced proteinase inhibitor 1 (PIIF) from Solanum lycopersicum (Tomato).